Consider the following 87-residue polypeptide: Conotoxin Ca6.2 (87 aa).

Positions 1 to 19 (MHTLEMLLLVLLLVPLAPG) are cleaved as a signal peptide. The propeptide occupies 20–52 (EGDGQAVGGDRNPSEARRAYKRLLQRPARRMDR). 3 disulfides stabilise this stretch: cysteine 55/cysteine 64, cysteine 58/cysteine 70, and cysteine 63/cysteine 84.

Belongs to the conotoxin Q superfamily. In terms of tissue distribution, expressed by the venom duct.

The protein localises to the secreted. In Conus caracteristicus (Characteristic cone), this protein is Conotoxin Ca6.2.